Consider the following 204-residue polypeptide: Proteasome subunit beta type-2-A (204 aa).

The residue at position 1 (M1) is an N-acetylmethionine.

This sequence belongs to the peptidase T1B family. As to quaternary structure, component of the 20S core complex of the 26S proteasome. The 26S proteasome is composed of a core protease (CP), known as the 20S proteasome, capped at one or both ends by the 19S regulatory particle (RP/PA700). The 20S proteasome core is composed of 28 subunits that are arranged in four stacked rings, resulting in a barrel-shaped structure. The two end rings are each formed by seven alpha subunits, and the two central rings are each formed by seven beta subunits. The catalytic chamber with the active sites is on the inside of the barrel.

The protein localises to the cytoplasm. The protein resides in the nucleus. Functionally, non-catalytic component of the proteasome, a multicatalytic proteinase complex which is characterized by its ability to cleave peptides with Arg, Phe, Tyr, Leu, and Glu adjacent to the leaving group at neutral or slightly basic pH. The proteasome has an ATP-dependent proteolytic activity. This Arabidopsis thaliana (Mouse-ear cress) protein is Proteasome subunit beta type-2-A (PBD1).